The following is a 382-amino-acid chain: Flap endonuclease 1-B (382 aa).

Residues 1–104 (MGIHGLAKLI…GELAKRSERR (104 aa)) form an N-domain region. Mg(2+) is bound at residue Asp-34. Arg-47 and Arg-70 together coordinate DNA. Mg(2+) is bound by residues Asp-86, Glu-158, Glu-160, Asp-179, and Asp-181. Residues 122–253 (NIEKFNKRLV…KRAIDLIRQH (132 aa)) form an I-domain region. Residue Glu-158 participates in DNA binding. Gly-231 and Asp-233 together coordinate DNA. Position 233 (Asp-233) interacts with Mg(2+). The tract at residues 336-344 (TQGRLDDFF) is interaction with PCNA. A disordered region spans residues 352-382 (STKRKEVESKGSTKKKSKTGGTPAGKFKRGK).

It belongs to the XPG/RAD2 endonuclease family. FEN1 subfamily. In terms of assembly, interacts with PCNA. Three molecules of fen1 bind to one PCNA trimer with each molecule binding to one PCNA monomer. PCNA stimulates the nuclease activity without altering cleavage specificity. Mg(2+) serves as cofactor. Phosphorylated. Phosphorylation upon DNA damage induces relocalization to the nuclear plasma.

It localises to the nucleus. The protein localises to the nucleolus. It is found in the nucleoplasm. The protein resides in the mitochondrion. In terms of biological role, structure-specific nuclease with 5'-flap endonuclease and 5'-3' exonuclease activities involved in DNA replication and repair. During DNA replication, cleaves the 5'-overhanging flap structure that is generated by displacement synthesis when DNA polymerase encounters the 5'-end of a downstream Okazaki fragment. It enters the flap from the 5'-end and then tracks to cleave the flap base, leaving a nick for ligation. Also involved in the long patch base excision repair (LP-BER) pathway, by cleaving within the apurinic/apyrimidinic (AP) site-terminated flap. Acts as a genome stabilization factor that prevents flaps from equilibrating into structures that lead to duplications and deletions. Also possesses 5'-3' exonuclease activity on nicked or gapped double-stranded DNA, and exhibits RNase H activity. Also involved in replication and repair of rDNA and in repairing mitochondrial DNA. This chain is Flap endonuclease 1-B (fen1-b), found in Xenopus laevis (African clawed frog).